The following is a 234-amino-acid chain: Protein-toxin resistance protein KTD1 (234 aa).

Topologically, residues 1-47 are cytoplasmic; it reads MQTPSENTDVKMDTLDEPSAHLIEENVALPEDTFSSHLSYVLYEIAH. A helical transmembrane segment spans residues 48–68; sequence CKPIMFMIIIIVSLISLIVLF. The interval 68–75 is required for resistance to killer toxin K28, a protein-toxin encoded by the M28 virus; it reads FHDNDGCT. The Extracellular portion of the chain corresponds to 69-76; it reads HDNDGCTV. Residues 77–97 traverse the membrane as a helical segment; it reads ILVMSLIVASMALMVVAAFTF. Topologically, residues 98 to 234 are cytoplasmic; that stretch reads GKAITEQEFM…RKQYPDADLP (137 aa). Positions 147-234 are required for resistance to killer toxin K28, a protein-toxin encoded by the M28 virus; that stretch reads FYSGKKCHEF…RKQYPDADLP (88 aa). The tract at residues 168–187 is disordered; that stretch reads SHSDSSSNSAEDTQSPVSAG. Residues 177–187 show a composition bias toward polar residues; that stretch reads AEDTQSPVSAG. Lys-217 is covalently cross-linked (Glycyl lysine isopeptide (Lys-Gly) (interchain with G-Cter in ubiquitin)).

This sequence belongs to the DUP/COS family.

The protein localises to the vacuole membrane. It is found in the golgi apparatus. The protein resides in the trans-Golgi network membrane. Its subcellular location is the endosome membrane. Confers resistance to killer toxin K28, a protein-toxin encoded by the M28 virus that uses S.cerevisiae as a host. Probably acts against K28 after endocytosis of the protein-toxin. The protein is Protein-toxin resistance protein KTD1 of Saccharomyces cerevisiae (strain ATCC 204508 / S288c) (Baker's yeast).